The sequence spans 66 residues: DNA-directed RNA polymerase subunit Rpo10 (66 aa).

Residues Cys-7, Cys-10, Cys-44, and Cys-45 each coordinate Zn(2+).

This sequence belongs to the archaeal Rpo10/eukaryotic RPB10 RNA polymerase subunit family. In terms of assembly, part of the RNA polymerase complex. Zn(2+) serves as cofactor.

The protein resides in the cytoplasm. The enzyme catalyses RNA(n) + a ribonucleoside 5'-triphosphate = RNA(n+1) + diphosphate. In terms of biological role, DNA-dependent RNA polymerase (RNAP) catalyzes the transcription of DNA into RNA using the four ribonucleoside triphosphates as substrates. The polypeptide is DNA-directed RNA polymerase subunit Rpo10 (Saccharolobus islandicus (strain Y.N.15.51 / Yellowstone #2) (Sulfolobus islandicus)).